Consider the following 334-residue polypeptide: Chorismatase (334 aa).

Tyr-143, Arg-150, Tyr-203, and Arg-216 together coordinate substrate. Glu-328 serves as the catalytic Proton acceptor.

This sequence belongs to the FkbO/Hyg5 family. In terms of assembly, monomer.

It catalyses the reaction chorismate + H2O = (3R,4R)-3,4-dihydroxy-3,4-dihydrobenzoate + pyruvate. Its function is as follows. Involved in the biosynthesis of the macrocyclic amino acid-linked polyketides rapamycin which is a potent immunosuppressant that prevents T-cell proliferation through initial binding to the immunophilin FKBP12. Catalyzes the hydrolysis of chorismate via a 1,4-conjugate elimination of water to yield (4R,5R)-4,5-dihydroxycyclohexa-1,5-dienecarboxylic acid (DCDC). This chain is Chorismatase (rapK), found in Streptomyces rapamycinicus (strain ATCC 29253 / DSM 41530 / NRRL 5491 / AYB-994) (Streptomyces hygroscopicus (strain ATCC 29253)).